Reading from the N-terminus, the 114-residue chain is Large ribosomal subunit protein bL20c (114 aa).

Belongs to the bacterial ribosomal protein bL20 family.

It localises to the plastid. Its function is as follows. Binds directly to 23S ribosomal RNA and is necessary for the in vitro assembly process of the 50S ribosomal subunit. It is not involved in the protein synthesizing functions of that subunit. In Prototheca wickerhamii, this protein is Large ribosomal subunit protein bL20c.